The following is a 452-amino-acid chain: Na(+)/H(+) antiporter NhaA (452 aa).

11 helical membrane-spanning segments follow: residues Phe27–Leu47, Phe67–Met87, Ala108–Phe128, Gly137–Gly157, Val166–Phe186, Leu194–Val214, Ser216–Ile236, Pro314–Ser334, Gly343–Leu363, Trp381–Ile401, and Val414–Ile434.

It belongs to the NhaA Na(+)/H(+) (TC 2.A.33) antiporter family.

It localises to the cell inner membrane. It catalyses the reaction Na(+)(in) + 2 H(+)(out) = Na(+)(out) + 2 H(+)(in). Na(+)/H(+) antiporter that extrudes sodium in exchange for external protons. The chain is Na(+)/H(+) antiporter NhaA from Wolinella succinogenes (strain ATCC 29543 / DSM 1740 / CCUG 13145 / JCM 31913 / LMG 7466 / NCTC 11488 / FDC 602W) (Vibrio succinogenes).